The sequence spans 338 residues: Citramalyl-CoA lyase, mitochondrial (338 aa).

The transit peptide at Met1–Lys20 directs the protein to the mitochondrion. Substrate-binding residues include Tyr48, Lys55, and Lys59. Residues Lys55, Lys59, and Lys64 each carry the N6-acetyllysine modification. 2 positions are modified to N6-acetyllysine; alternate: Lys80 and Lys90. An N6-succinyllysine; alternate mark is found at Lys80 and Lys90. Substrate is bound at residue Arg105. Mg(2+) is bound by residues Glu169 and Asp204. Ile270–His271 serves as a coordination point for substrate. Lys307 carries the N6-succinyllysine modification. Asp318 is an active-site residue.

The protein belongs to the HpcH/HpaI aldolase family. Citrate lyase beta subunit-like subfamily. Homotrimer. The cofactor is Mg(2+). In terms of tissue distribution, detected in brown fat, brain, liver, kidney, heart, skeletal muscle and ovary (at protein level).

Its subcellular location is the mitochondrion. The enzyme catalyses glyoxylate + acetyl-CoA + H2O = (S)-malate + CoA + H(+). It catalyses the reaction propanoyl-CoA + glyoxylate + H2O = 3-methylmalate + CoA + H(+). The catalysed reaction is (3S)-citramalyl-CoA = pyruvate + acetyl-CoA. It carries out the reaction (S)-malyl-CoA + H2O = (S)-malate + CoA + H(+). In terms of biological role, mitochondrial citramalyl-CoA lyase indirectly involved in the vitamin B12 metabolism. Converts citramalyl-CoA into acetyl-CoA and pyruvate in the C5-dicarboxylate catabolism pathway. The C5-dicarboxylate catabolism pathway is required to detoxify itaconate, a vitamin B12-poisoning metabolite. Also acts as a malate synthase in vitro, converting glyoxylate and acetyl-CoA to malate. Also displays malyl-CoA thioesterase activity. Also acts as a beta-methylmalate synthase in vitro, by mediating conversion of glyoxylate and propionyl-CoA to beta-methylmalate. Also has very weak citramalate synthase activity in vitro. The sequence is that of Citramalyl-CoA lyase, mitochondrial from Mus musculus (Mouse).